The following is a 604-amino-acid chain: NADP-dependent malic enzyme, mitochondrial (604 aa).

The interval S28–G50 is disordered. The Proton donor role is filled by Y137. R190 contributes to the NADP(+) binding site. K208 acts as the Proton acceptor in catalysis. A divalent metal cation contacts are provided by E280, D281, and D304. Residue D304 participates in NADP(+) binding. The residue at position 371 (S371) is a Phosphoserine. N443 is an NADP(+) binding site.

It belongs to the malic enzymes family. It depends on Mg(2+) as a cofactor. The cofactor is Mn(2+).

The protein resides in the mitochondrion matrix. It carries out the reaction (S)-malate + NADP(+) = pyruvate + CO2 + NADPH. It catalyses the reaction oxaloacetate + H(+) = pyruvate + CO2. The polypeptide is NADP-dependent malic enzyme, mitochondrial (Me3) (Mus musculus (Mouse)).